A 2472-amino-acid chain; its full sequence is MPGGVRDLPALWEFLKEQKDVHREFDEPRFSAKGFSHPNPDRPGTAVARSGFLLDEDPRLFDAAFFGITDNEVETMDASQRKLLEVTYEAFENAGETWEGVSGSRVGVFVGDISFDNYLSQTRDWDYSGKYSATGSFPNMLANRIHYVFNLKGPSLLVNSACTSAMYALHLAMNSIRNGDCESAIVAGSNWIMDPNCHIAMGKLGALSATSRSHTFDASADGYARGEGFAALYLKKTSLAIEDGSPIRALIMGSAINANGRTNGITNPSGPAQEIVIREAYKNAGDLDPSQTTLLECHGTGTRVGDPTEIKAAGNVFGPSRSSERNDHLVVGSVKTNLGHLEGACALPGILKVVAALEQGEIPPTLGFQTPNPRIDFEEAKARVSTQVEPWPKDKLKRASITSAGFGGTNGHCIIDDVHNLLPSYIKPGIVGQHVERLNGQNDINGKSGTNGANGANRVNGVNGVNGVNGVNGANGHSNASLLSNGSNNPLDQRKHHHPKTDALKLVRKADAGTRKLVVLPFSAHNQTSLVANIDSLGQVIHQHSLADVAYTLSARRSRFMHRSYCIVDKDQVPEMGLKQEKELEIVSSPQHVSVGFIFTGQGAQWHAMGAGLFQYSVFQNVILYLDSILAMLPEPAPWKIADFIAGNCGTDDIQTPAVSQAVCTAVQIGLVDLLASWSVRPAGVAGHSSGEIAAAYASGRITAAEAIVAAYYRGYMVSFNNKRGAMLAVGFGPEKAMEYIREADVEDRVTVAAINSFDSVTLSGDADCVEDLSARLSKESIFNRLLRTGGLAYHSHHMLPFGSAYEEHVNDGLSHIRSLGVDTTSSKYPFIPWASSVTPDKSTTEVTASYWRANLESPVRFTDAVSNLLSLPDLNIGALVEIGPHPALKGPLGQITKSLGKVIPHIASLKRNQDAQRSLLECTGTLFVHNVSVSLVAVNAIDGQGPKGEHYLEYGCTAIDLPRYKYTYGPIKYHESRLSKEYRLRPTLRHDLLGSKVPGTTKLRPQWRNMLRLKDLGWLNDHRVPPHVLHPGAAHIVMAMVAAEHKYNEFPDALPIIGLIMRNVSIKKTLVVPEDDHGIEIVLSMELEDGATAKSPGWASFSIASIVRDSDQWTEHCSGQIKVEVAKFEQAMPIDTTMDGRLVDAQTWYKRFADMGLQFGPSFQGYSDIRADPAKNIASAKLALNTTAGMFPGGESTYPIHPASLDLVIRLGLMACNGGQAETASVQLPIHFNQMKFNYGHLEGRDWATGVSRGELRGLRGAYAQLQMLDEEGKVMLDIDNMRFTSLNNEQESPSTGDRVGKAYVSPFARLVWRPDIRTLSKDQFNEALTSYQDNFGEFPQLCRIFDLAGHANPDLRVLELGVSSNAGATQAILKVLMGSNSIKRYREYVATDITEERLESVRESTTEFRDVKYSVLDINKDPSEQGFQSGLYDIIVCSNGLQTPQAMQHLKRLVTPTGRLIQVNGTGSEIVPESLQNVDFELVGEVTEPVNHSIITVHALRSIEQHQIDSNRLVHFLHGDQGPPELLNQLAQVLGELGLAIKISLIDDAQTVVSPNSHVVAFLDGNNLLFAANQHRIGLFQHLAANTNSMMWLTSCGLVKGRNPDGSFVSGLLRTLAAENPAGQFLSVDIDAEDFRVRDTEMDRLVRSLVEVVLPLQQNPEHNREIVVNHDLAWQDGNMWVSRLVPDTELQGYDETAADDQNIKAIPLSTLGPVRAAFKIPGLLTSLYFKPYTELWNALPQDWIEIKLEAVGLNWKDLGLCSGRFDQNNLSNEYVGVISDIGSSVHGFSIGDRVYGMGKGHFGNYTRVPAVLAQKLEASVASLDAATMPLVYMTAVYAFEHITRVKGGSKVLIQSGSGGLGLAAIQLALSKGADVYVTVGTADKAQFLTDVMGISSDHIFSSRKLTDVPRMIRATKNGGFDVILSTSQGDMLHESIEALAPLGHLIDVGRMDVTGAKTVALELFQKSASFTSFDLGLVIERDPELGGDLMSTVNQHFRAGRIGPIRPYHVSDISQLDQALLKLSKGTHIGKMVISYQNPSSLLNVHQSVTHARFLSEASYILVGGLSPLGRCIIRWMVSRGAQHLSVWSRRGADNLSPEAAALINEMASQGVHIQIVTCDVSNREQVLRSMQDANSERAVRGVFNYAVSYQDISFDKMTADMFYQGMAAKVFGTKNLHEATANLPLDFFTMTSSLGTVYAFPTQSTYLAANNFLDYFARYRRQSGLPATTVSLGFIKDLGALTQDEVTVNLFARTKGQTVTGNQVLRALEPAFVKDLNTKDQWLGRSEDPLSAANIFTGIDPAVLANMKRAEPKGSASSTVPRWYHDPRVSLMLRAMDDAWRFGNEGGSDKATFGFDDADASPAVQLRRHFEASMKRIRNGQDEKEVAETVKLVSDAIRTTVAGMLFIDPSVVKESHTVVDHGIDSLLAAEFRTWLNSSFGKNISMLQLMDARSNIGSIARVIVEEAIGA.

Positions 1-417 constitute a Ketosynthase family 3 (KS3) domain; that stretch reads MPGGVRDLPA…GTNGHCIIDD (417 aa). Residues Cys162, His298, and His340 each act as for beta-ketoacyl synthase activity in the active site. The interval 442–502 is disordered; it reads NDINGKSGTN…QRKHHHPKTD (61 aa). Over residues 450–489 the composition is skewed to low complexity; sequence TNGANGANRVNGVNGVNGVNGVNGANGHSNASLLSNGSNN. A Malonyl-CoA:ACP transacylase (MAT) domain is found at 597 to 932; the sequence is FIFTGQGAQW…CTGTLFVHNV (336 aa). The interval 991–1129 is N-terminal hotdog fold; sequence HDLLGSKVPG…GQIKVEVAKF (139 aa). One can recognise a PKS/mFAS DH domain in the interval 991–1294; sequence HDLLGSKVPG…FTSLNNEQES (304 aa). Residue His1023 is the Proton acceptor; for dehydratase activity of the active site. The segment at 1141–1294 is C-terminal hotdog fold; it reads GRLVDAQTWY…FTSLNNEQES (154 aa). Asp1207 acts as the Proton donor; for dehydratase activity in catalysis. The tract at residues 1289 to 1505 is methyltransferase (CMeT) domain; the sequence is NNEQESPSTG…IITVHALRSI (217 aa). The Enoyl reductase (ER) domain occupies 1724-2036; sequence GLLTSLYFKP…KGTHIGKMVI (313 aa). The 180-residue stretch at 2060-2239 folds into the Ketoreductase (KR) domain; that stretch reads ASYILVGGLS…ATTVSLGFIK (180 aa). A Carrier domain is found at 2391-2469; the sequence is ETVKLVSDAI…SIARVIVEEA (79 aa). Position 2428 is an O-(pantetheine 4'-phosphoryl)serine (Ser2428).

Pantetheine 4'-phosphate is required as a cofactor.

It functions in the pathway secondary metabolite biosynthesis. In terms of biological role, highly reducing polyketide synthase; part of the gene cluster that mediates the biosynthesis of the 6-methyl-2-pyrone derivative xylariolide D. XilA produces the 5-alkyl-6-methyl-2-pyrone backbone called prexylariolide D via sequential condensations of 4 malonyl-CoA units with one acetyl-CoA starter unit. During the biosynthesis, the linear polyketide chain is branched by the addition of an acetyl unit as the origin of the methyl group at the 2-pyrone ring. Prexylariolide D is then hydroxylated at the side chain by xilC to form the final product, xylariolide D. This is Highly reducing polyketide synthase xilA from Penicillium crustosum (Blue mold fungus).